The sequence spans 85 residues: Exodeoxyribonuclease 7 small subunit (85 aa).

The protein belongs to the XseB family. In terms of assembly, heterooligomer composed of large and small subunits.

It localises to the cytoplasm. It catalyses the reaction Exonucleolytic cleavage in either 5'- to 3'- or 3'- to 5'-direction to yield nucleoside 5'-phosphates.. Functionally, bidirectionally degrades single-stranded DNA into large acid-insoluble oligonucleotides, which are then degraded further into small acid-soluble oligonucleotides. The sequence is that of Exodeoxyribonuclease 7 small subunit from Alkalilimnicola ehrlichii (strain ATCC BAA-1101 / DSM 17681 / MLHE-1).